Reading from the N-terminus, the 695-residue chain is Centrosomal protein of 89 kDa (695 aa).

3 disordered regions span residues 24–54 (LIPA…RPRS), 66–147 (TGRT…GDED), and 167–272 (AVPL…SEVL). Over residues 34-49 (PAVPRTPPPRSPNPSP) the composition is skewed to pro residues. 2 stretches are compositionally biased toward acidic residues: residues 124–146 (DEDD…EGDE) and 178–189 (DSDVDEETEDSA). Positions 209–226 (GQTQPSSLPQPRSVSRRS) are enriched in polar residues. Residues 251-271 (TNKESPVRVNERDRSSEDSEV) are compositionally biased toward basic and acidic residues. Coiled coils occupy residues 276-368 (LEVQ…RYQA) and 406-632 (AYED…LEKE).

It localises to the cytoplasm. The protein localises to the cytosol. The protein resides in the cytoskeleton. It is found in the microtubule organizing center. Its subcellular location is the centrosome. It localises to the spindle pole. The protein localises to the centriole. The protein resides in the mitochondrion intermembrane space. In terms of biological role, required for ciliogenesis. Also plays a role in mitochondrial metabolism where it may modulate complex IV activity. This is Centrosomal protein of 89 kDa (cep89) from Danio rerio (Zebrafish).